Reading from the N-terminus, the 120-residue chain is FK506-binding protein 1B (120 aa).

Positions Met1 to Gly24 are disordered. One can recognise a PPIase FKBP-type domain in the interval Gly24–Gly120.

This sequence belongs to the FKBP-type PPIase family. FKBP1 subfamily.

It catalyses the reaction [protein]-peptidylproline (omega=180) = [protein]-peptidylproline (omega=0). PPIases accelerate the folding of proteins. It catalyzes the cis-trans isomerization of proline imidic peptide bonds in oligopeptides. The chain is FK506-binding protein 1B (FKBP3) from Emericella nidulans (strain FGSC A4 / ATCC 38163 / CBS 112.46 / NRRL 194 / M139) (Aspergillus nidulans).